Consider the following 138-residue polypeptide: ATP synthase epsilon chain (138 aa).

This sequence belongs to the ATPase epsilon chain family. In terms of assembly, F-type ATPases have 2 components, CF(1) - the catalytic core - and CF(0) - the membrane proton channel. CF(1) has five subunits: alpha(3), beta(3), gamma(1), delta(1), epsilon(1). CF(0) has three main subunits: a, b and c.

The protein resides in the cell inner membrane. Its function is as follows. Produces ATP from ADP in the presence of a proton gradient across the membrane. The protein is ATP synthase epsilon chain of Idiomarina loihiensis (strain ATCC BAA-735 / DSM 15497 / L2-TR).